The following is a 722-amino-acid chain: Peroxisomal bifunctional enzyme (722 aa).

The enoyl-CoA hydratase / isomerase stretch occupies residues Met1–Ser281. Position 2 is a blocked amino end (Ala) (Ala2). Position 38 is an N6-succinyllysine (Lys38). Gly100 lines the substrate pocket. An N6-acetyllysine; alternate modification is found at Lys173. Lys173 carries the post-translational modification N6-succinyllysine; alternate. Lys182 carries the N6-succinyllysine modification. N6-acetyllysine; alternate is present on residues Lys190 and Lys218. An N6-succinyllysine; alternate mark is found at Lys190 and Lys218. Position 241 is an N6-succinyllysine (Lys241). Lys249 is modified (N6-acetyllysine). Position 253 is an N6-succinyllysine (Lys253). Lys275 bears the N6-acetyllysine; alternate mark. Lys275 is subject to N6-succinyllysine; alternate. An N6-succinyllysine mark is found at Lys279, Lys289, and Lys330. A 3-hydroxyacyl-CoA dehydrogenase region spans residues Thr282–Gly571. 3 positions are modified to N6-acetyllysine: Lys345, Lys359, and Lys463. Lys531 is modified (N6-succinyllysine). At Thr547 the chain carries Phosphothreonine. N6-succinyllysine is present on Lys576. An N6-acetyllysine; alternate mark is found at Lys583, Lys590, and Lys709. 3 positions are modified to N6-succinyllysine; alternate: Lys583, Lys590, and Lys709. The Microbody targeting signal signature appears at Ser720–Leu722. An N6-succinyllysine modification is found at Lys721.

The protein in the N-terminal section; belongs to the enoyl-CoA hydratase/isomerase family. This sequence in the C-terminal section; belongs to the 3-hydroxyacyl-CoA dehydrogenase family. As to quaternary structure, monomer. Acetylated, leading to enhanced enzyme activity. Acetylation is enhanced by up to 80% after treatment either with trichostin A (TCA) or with nicotinamide (NAM) with highest increase on Lys-345. Acetylation and enzyme activity increased by about 1.5% on addition of fatty acids.

It is found in the peroxisome. The enzyme catalyses a (3S)-3-hydroxyacyl-CoA = a (2E)-enoyl-CoA + H2O. It carries out the reaction a 4-saturated-(3S)-3-hydroxyacyl-CoA = a (3E)-enoyl-CoA + H2O. It catalyses the reaction a (3Z)-enoyl-CoA = a 4-saturated (2E)-enoyl-CoA. The catalysed reaction is a (3E)-enoyl-CoA = a 4-saturated (2E)-enoyl-CoA. The enzyme catalyses a (3S)-3-hydroxyacyl-CoA + NAD(+) = a 3-oxoacyl-CoA + NADH + H(+). It carries out the reaction (2S,3S)-3-hydroxy-2-methylbutanoyl-CoA = (2E)-2-methylbut-2-enoyl-CoA + H2O. It catalyses the reaction (3E,5Z)-tetradecadienoyl-CoA = (2E,5Z)-tetradecadienoyl-CoA. The catalysed reaction is (3E,5Z)-octadienoyl-CoA = (2E,5Z)-octadienoyl-CoA. The enzyme catalyses (3S)-hydroxydecanoyl-CoA + NAD(+) = 3-oxodecanoyl-CoA + NADH + H(+). It carries out the reaction (3E)-decenoyl-CoA = (2E)-decenoyl-CoA. It catalyses the reaction (3Z)-hexenoyl-CoA = (2E)-hexenoyl-CoA. The catalysed reaction is (3E)-hexenoyl-CoA = (2E)-hexenoyl-CoA. The enzyme catalyses (3S)-hydroxydecanoyl-CoA = (2E)-decenoyl-CoA + H2O. It carries out the reaction (3S)-hydroxyhexanoyl-CoA = (2E)-hexenoyl-CoA + H2O. It catalyses the reaction (3S)-hydroxyhexadecanoyl-CoA + NAD(+) = 3-oxohexadecanoyl-CoA + NADH + H(+). The catalysed reaction is (3S)-hydroxyhexadecanoyl-CoA = (2E)-hexadecenoyl-CoA + H2O. The enzyme catalyses (2E)-hexadecenedioyl-CoA + H2O = (3S)-hydroxyhexadecanedioyl-CoA. It carries out the reaction (3S)-hydroxyhexadecanedioyl-CoA + NAD(+) = 3-oxohexadecanedioyl-CoA + NADH + H(+). Its pathway is lipid metabolism; fatty acid beta-oxidation. Its activity is regulated as follows. Enzyme activity enhanced by acetylation. Functionally, peroxisomal trifunctional enzyme possessing 2-enoyl-CoA hydratase, 3-hydroxyacyl-CoA dehydrogenase, and delta 3, delta 2-enoyl-CoA isomerase activities. Catalyzes two of the four reactions of the long chain fatty acids peroxisomal beta-oxidation pathway. Can also use branched-chain fatty acids such as 2-methyl-2E-butenoyl-CoA as a substrate, which is hydrated into (2S,3S)-3-hydroxy-2-methylbutanoyl-CoA. Optimal isomerase for 2,5 double bonds into 3,5 form isomerization in a range of enoyl-CoA species. Also able to isomerize both 3-cis and 3-trans double bonds into the 2-trans form in a range of enoyl-CoA species. Regulates the amount of medium-chain dicarboxylic fatty acids which are essential regulators of all fatty acid oxidation pathways. Also involved in the degradation of long-chain dicarboxylic acids through peroxisomal beta-oxidation. This is Peroxisomal bifunctional enzyme from Rattus norvegicus (Rat).